The primary structure comprises 728 residues: Probable 3',5'-cyclic phosphodiesterase pde-5 (728 aa).

One can recognise a GAF domain in the interval 214–371 (SMDAVIIKVM…HHAKLYDKIR (158 aa)). A PDEase domain is found at 390 to 709 (CNADEVNKLK…KKWEELAEEQ (320 aa)). His465 serves as the catalytic Proton donor. The a divalent metal cation site is built by His469, His503, Asp504, and Asp614. The stretch at 691-728 (MRERCEYNAKKWEELAEEQRKKQEALAQQNGEANETQE) forms a coiled coil. The disordered stretch occupies residues 708-728 (EQRKKQEALAQQNGEANETQE). Positions 716–728 (LAQQNGEANETQE) are enriched in polar residues.

It belongs to the cyclic nucleotide phosphodiesterase family. A divalent metal cation serves as cofactor.

The enzyme catalyses a nucleoside 3',5'-cyclic phosphate + H2O = a nucleoside 5'-phosphate + H(+). Its function is as follows. Redundantly with pde-1, plays a role in the AFD thermosensory neurons to regulate microvilli receptive ending morphology, possibly by regulating cGMP levels. The sequence is that of Probable 3',5'-cyclic phosphodiesterase pde-5 (pde-5) from Caenorhabditis elegans.